The following is a 746-amino-acid chain: NAD(P)H-quinone oxidoreductase subunit 5, chloroplastic (746 aa).

The next 16 helical transmembrane spans lie at 9 to 29 (WIIPFIPLPVPILLGVGLLLF), 39 to 59 (IWTFLSIFLLSIVMIFSLYLS), 89 to 109 (IDPLTSIMSILITTVGILVLI), 125 to 145 (FAYMGFFNTSMLGLVTSSNLI), 147 to 167 (VYFFWELVGMCSYLLIGFWFT), 185 to 205 (GDFGLLLGILGLYWITGSFEF), 221 to 241 (VNFFFFTLCGFLLFVGPIAKS), 258 to 278 (TPISALIHAATMVAAGIFLVA), 280 to 300 (LLPLFIVIPSIMYIISLIGII), 327 to 347 (LGYMMLALGMGSYRSALFHLI), 354 to 374 (ALLFLGSGSIIHSMEAIVGYS), 396 to 416 (TAFLIGTLSLCGIPPLACFWS), 425 to 445 (LLFSPIFAIIACSTAGLTAFY), 547 to 567 (ILFPILILLLFTLFIGAIGIP), 608 to 628 (FSVSIAFFGIFIAYCLYKPFY), and 723 to 743 (YLFFYLSYVLIFLLILFFFYF).

This sequence belongs to the complex I subunit 5 family. In terms of assembly, NDH is composed of at least 16 different subunits, 5 of which are encoded in the nucleus.

It localises to the plastid. Its subcellular location is the chloroplast thylakoid membrane. The catalysed reaction is a plastoquinone + NADH + (n+1) H(+)(in) = a plastoquinol + NAD(+) + n H(+)(out). It catalyses the reaction a plastoquinone + NADPH + (n+1) H(+)(in) = a plastoquinol + NADP(+) + n H(+)(out). In terms of biological role, NDH shuttles electrons from NAD(P)H:plastoquinone, via FMN and iron-sulfur (Fe-S) centers, to quinones in the photosynthetic chain and possibly in a chloroplast respiratory chain. The immediate electron acceptor for the enzyme in this species is believed to be plastoquinone. Couples the redox reaction to proton translocation, and thus conserves the redox energy in a proton gradient. The protein is NAD(P)H-quinone oxidoreductase subunit 5, chloroplastic (ndhF) of Capsella bursa-pastoris (Shepherd's purse).